The chain runs to 407 residues: Arginine deiminase (407 aa).

Catalysis depends on Cys-397, which acts as the Amidino-cysteine intermediate.

It belongs to the arginine deiminase family.

It localises to the cytoplasm. It catalyses the reaction L-arginine + H2O = L-citrulline + NH4(+). The protein operates within amino-acid degradation; L-arginine degradation via ADI pathway; carbamoyl phosphate from L-arginine: step 1/2. The sequence is that of Arginine deiminase from Pediococcus pentosaceus (strain ATCC 25745 / CCUG 21536 / LMG 10740 / 183-1w).